The primary structure comprises 855 residues: Inactive rhomboid protein 1 (855 aa).

The Cytoplasmic portion of the chain corresponds to 1-411; sequence MSEARRDSTS…HRPFFTYWLT (411 aa). Phosphoserine is present on residues serine 76 and serine 176. Residues threonine 180 and threonine 183 each carry the phosphothreonine modification. Position 390 is a phosphoserine (serine 390). A helical membrane pass occupies residues 412 to 432; it reads FVHSLVTILAVCIYGIAPVGF. The Lumenal portion of the chain corresponds to 433–655; it reads SQHETVDSVL…NPEVPDQFYR (223 aa). Asparagine 583 carries N-linked (GlcNAc...) asparagine glycosylation. The helical transmembrane segment at 656 to 676 threads the bilayer; it reads LWLSLFLHAGILHCLVSICFQ. The Cytoplasmic portion of the chain corresponds to 677–691; the sequence is MTVLRDLEKLAGWHR. A helical transmembrane segment spans residues 692 to 712; it reads IAIIYLLSGVTGNLASAIFLP. Residues 713–714 lie on the Lumenal side of the membrane; that stretch reads YR. The chain crosses the membrane as a helical span at residues 715–735; that stretch reads AEVGPAGSQFGILACLFVELF. Residues 736-746 lie on the Cytoplasmic side of the membrane; it reads QSWQILARPWR. The chain crosses the membrane as a helical span at residues 747 to 767; that stretch reads AFFKLLAVVLFLFTFGLLPWI. Over 768-772 the chain is Lumenal; that stretch reads DNFAH. Residues 773–793 form a helical membrane-spanning segment; the sequence is ISGFISGLFLSFAFLPYISFG. Residues 794–803 lie on the Cytoplasmic side of the membrane; the sequence is KFDLYRKRCQ. Residues 804-824 traverse the membrane as a helical segment; it reads IIIFQVVFLGLLAGLVVLFYV. Over 825–855 the chain is Lumenal; that stretch reads YPVRCEWCEFLTCIPFTDKFCEKYELDAQLH.

It belongs to the peptidase S54 family. Homodimer, or homooligomer. Interacts with TGFA and HBEGF. Interacts with EGF; may retain EGF in the endoplasmic reticulum and regulates its degradation through the endoplasmic reticulum-associated degradation (ERAD). Interacts (via cytoplasmic N-terminus) with FRMD8/iTAP; this interaction leads to mutual protein stabilization. Interacts with ADAM17/TACE. In terms of processing, N-glycosylated. Highly expressed in cerebellum, cerebrum, heart, skeletal muscle, placenta, pancreatic islet and testis. Detected at lower levels in colon, kidney, small intestine and lung.

The protein localises to the endoplasmic reticulum membrane. It localises to the golgi apparatus membrane. Functionally, regulates ADAM17 protease, a sheddase of the epidermal growth factor (EGF) receptor ligands and TNF, thereby plays a role in sleep, cell survival, proliferation, migration and inflammation. Does not exhibit any protease activity on its own. The sequence is that of Inactive rhomboid protein 1 (RHBDF1) from Homo sapiens (Human).